Consider the following 417-residue polypeptide: Serine hydroxymethyltransferase 1 (417 aa).

(6S)-5,6,7,8-tetrahydrofolate is bound by residues Leu121 and 125-127 (GHL). Lys230 bears the N6-(pyridoxal phosphate)lysine mark. (6S)-5,6,7,8-tetrahydrofolate is bound at residue 355–357 (SPF).

This sequence belongs to the SHMT family. Homodimer. It depends on pyridoxal 5'-phosphate as a cofactor.

The protein resides in the cytoplasm. It catalyses the reaction (6R)-5,10-methylene-5,6,7,8-tetrahydrofolate + glycine + H2O = (6S)-5,6,7,8-tetrahydrofolate + L-serine. Its pathway is one-carbon metabolism; tetrahydrofolate interconversion. The protein operates within amino-acid biosynthesis; glycine biosynthesis; glycine from L-serine: step 1/1. Its function is as follows. Catalyzes the reversible interconversion of serine and glycine with tetrahydrofolate (THF) serving as the one-carbon carrier. This reaction serves as the major source of one-carbon groups required for the biosynthesis of purines, thymidylate, methionine, and other important biomolecules. Also exhibits THF-independent aldolase activity toward beta-hydroxyamino acids, producing glycine and aldehydes, via a retro-aldol mechanism. The sequence is that of Serine hydroxymethyltransferase 1 from Pseudomonas putida (strain ATCC 47054 / DSM 6125 / CFBP 8728 / NCIMB 11950 / KT2440).